The sequence spans 107 residues: uncharacterized protein (107 aa).

2 consecutive transmembrane segments (helical) span residues 11–31 and 58–78; these read CVNF…ILCI and LFFL…LAFQ.

Its subcellular location is the mitochondrion membrane. This is an uncharacterized protein from Saccharomyces cerevisiae (strain ATCC 204508 / S288c) (Baker's yeast).